The sequence spans 122 residues: Small ribosomal subunit protein uS12c (122 aa).

The protein belongs to the universal ribosomal protein uS12 family. As to quaternary structure, part of the 30S ribosomal subunit.

The protein localises to the plastid. It localises to the chloroplast. In terms of biological role, with S4 and S5 plays an important role in translational accuracy. Located at the interface of the 30S and 50S subunits. This chain is Small ribosomal subunit protein uS12c (rps12), found in Illicium oligandrum (Star anise).